The chain runs to 491 residues: UDP-N-acetylmuramate--L-alanine ligase (491 aa).

126-132 (GTHGKTT) lines the ATP pocket.

This sequence belongs to the MurCDEF family.

It localises to the cytoplasm. It carries out the reaction UDP-N-acetyl-alpha-D-muramate + L-alanine + ATP = UDP-N-acetyl-alpha-D-muramoyl-L-alanine + ADP + phosphate + H(+). Its pathway is cell wall biogenesis; peptidoglycan biosynthesis. Cell wall formation. In Escherichia coli O1:K1 / APEC, this protein is UDP-N-acetylmuramate--L-alanine ligase.